The chain runs to 334 residues: Sensor protein BceS (334 aa).

At 1-12 (MIKAFLIERRSW) the chain is on the cytoplasmic side. The chain crosses the membrane as a helical span at residues 13 to 33 (IAAFLFQQALMLFIAFVDPSI). Position 34 (Ser34) is a topological domain, extracellular. The helical transmembrane segment at 35–55 (FGNVLYMVYLCILFFIIFLWF) threads the bilayer. The Cytoplasmic segment spans residues 56 to 334 (RYRKETAFYK…RNQFEHVISV (279 aa)). The Histidine kinase domain occupies 121 to 326 (AWIHEVKTPL…VFTLTFPIRN (206 aa)). His124 carries the phosphohistidine; by autocatalysis modification.

The protein localises to the cell membrane. The enzyme catalyses ATP + protein L-histidine = ADP + protein N-phospho-L-histidine.. In terms of biological role, member of the two-component regulatory system BceS/BceR involved in the regulation of bacitracin resistance. Activates BceR in response to extracellular bacitracin. This Bacillus subtilis (strain 168) protein is Sensor protein BceS (bceS).